The primary structure comprises 122 residues: Large ribosomal subunit protein uL14 (122 aa).

The protein belongs to the universal ribosomal protein uL14 family. Part of the 50S ribosomal subunit. Forms a cluster with proteins L3 and L19. In the 70S ribosome, L14 and L19 interact and together make contacts with the 16S rRNA in bridges B5 and B8.

Its function is as follows. Binds to 23S rRNA. Forms part of two intersubunit bridges in the 70S ribosome. The chain is Large ribosomal subunit protein uL14 from Latilactobacillus sakei subsp. sakei (strain 23K) (Lactobacillus sakei subsp. sakei).